Here is a 144-residue protein sequence, read N- to C-terminus: Large ribosomal subunit protein uL16 (144 aa).

Belongs to the universal ribosomal protein uL16 family. In terms of assembly, part of the 50S ribosomal subunit.

Functionally, binds 23S rRNA and is also seen to make contacts with the A and possibly P site tRNAs. The chain is Large ribosomal subunit protein uL16 from Bacillus mycoides (strain KBAB4) (Bacillus weihenstephanensis).